Consider the following 339-residue polypeptide: Anthranilate phosphoribosyltransferase (339 aa).

5-phospho-alpha-D-ribose 1-diphosphate contacts are provided by residues Gly-81, 84–85, Thr-89, 91–94, 109–117, and Ser-121; these read GD, NIST, and KHGNRSVSS. An anthranilate-binding site is contributed by Gly-81. Residue Ser-93 coordinates Mg(2+). Asn-112 contributes to the anthranilate binding site. Residue Arg-165 coordinates anthranilate. 2 residues coordinate Mg(2+): Asp-224 and Glu-225.

The protein belongs to the anthranilate phosphoribosyltransferase family. As to quaternary structure, homodimer. The cofactor is Mg(2+).

It catalyses the reaction N-(5-phospho-beta-D-ribosyl)anthranilate + diphosphate = 5-phospho-alpha-D-ribose 1-diphosphate + anthranilate. It functions in the pathway amino-acid biosynthesis; L-tryptophan biosynthesis; L-tryptophan from chorismate: step 2/5. Its function is as follows. Catalyzes the transfer of the phosphoribosyl group of 5-phosphorylribose-1-pyrophosphate (PRPP) to anthranilate to yield N-(5'-phosphoribosyl)-anthranilate (PRA). The polypeptide is Anthranilate phosphoribosyltransferase (Thermosynechococcus vestitus (strain NIES-2133 / IAM M-273 / BP-1)).